The following is a 400-amino-acid chain: 3-hydroxybenzoate 6-hydroxylase (400 aa).

It belongs to the 3-hydroxybenzoate 6-hydroxylase family. Monomer. FAD is required as a cofactor.

It carries out the reaction 3-hydroxybenzoate + NADH + O2 + H(+) = 2,5-dihydroxybenzoate + NAD(+) + H2O. Catalyzes the NAD- or NADP-dependent conversion of 3-hydroxybenzoate to gentisate. The affinity of the enzyme toward NAD is twice as high as for NADP. The protein is 3-hydroxybenzoate 6-hydroxylase (nagX) of Polaromonas naphthalenivorans (strain CJ2).